A 180-amino-acid polypeptide reads, in one-letter code: Mitochondrial inner membrane protease subunit 2 (180 aa).

Residues leucine 19–valine 39 form a helical membrane-spanning segment. Active-site residues include serine 46 and lysine 92.

Belongs to the peptidase S26 family. IMP2 subfamily. In terms of assembly, heterodimer of 2 subunits, imp1 and imp2.

It localises to the mitochondrion inner membrane. Functionally, catalyzes the removal of transit peptides required for the targeting of proteins from the mitochondrial matrix, across the inner membrane, into the inter-membrane space. The protein is Mitochondrial inner membrane protease subunit 2 of Schizosaccharomyces pombe (strain 972 / ATCC 24843) (Fission yeast).